Here is a 371-residue protein sequence, read N- to C-terminus: Phospho-N-acetylmuramoyl-pentapeptide-transferase (371 aa).

9 helical membrane passes run 25 to 45, 77 to 94, 136 to 156, 172 to 192, 204 to 224, 240 to 260, 269 to 289, 296 to 316, and 348 to 368; these read TLLA…WLIA, MGGL…ALWA, IGWQ…HPAS, LIPH…IVGF, GLAI…AYVA, GTGE…AFLW, FMGD…AFMI, VIVG…VGVF, and KVVL…LATL.

This sequence belongs to the glycosyltransferase 4 family. MraY subfamily. It depends on Mg(2+) as a cofactor.

It localises to the cell inner membrane. The enzyme catalyses UDP-N-acetyl-alpha-D-muramoyl-L-alanyl-gamma-D-glutamyl-meso-2,6-diaminopimeloyl-D-alanyl-D-alanine + di-trans,octa-cis-undecaprenyl phosphate = di-trans,octa-cis-undecaprenyl diphospho-N-acetyl-alpha-D-muramoyl-L-alanyl-D-glutamyl-meso-2,6-diaminopimeloyl-D-alanyl-D-alanine + UMP. It participates in cell wall biogenesis; peptidoglycan biosynthesis. Its function is as follows. Catalyzes the initial step of the lipid cycle reactions in the biosynthesis of the cell wall peptidoglycan: transfers peptidoglycan precursor phospho-MurNAc-pentapeptide from UDP-MurNAc-pentapeptide onto the lipid carrier undecaprenyl phosphate, yielding undecaprenyl-pyrophosphoryl-MurNAc-pentapeptide, known as lipid I. The chain is Phospho-N-acetylmuramoyl-pentapeptide-transferase from Opitutus terrae (strain DSM 11246 / JCM 15787 / PB90-1).